Reading from the N-terminus, the 306-residue chain is MSNSKDEVERIDWLEAELADTIDEDYELELSEPTLSEKIREIYRKAHPPALPRMDYFRALLALQAELIKLQDWVVYHKQKVVVIFEGRDAAGKGGVIKRITQRLNPRIVRTVALPAPSDREKTQWYFQRYVPHLPAGGEIVLFDRSWYNRCGVERVMGFATEEEVEQFFDDVPEFERMLVRSGVRLVKYWFSITDEEQQLRFLTRIHDPLKQWKLSPMDLQSRVRWEAYTKAKEETFARTNIREAPWHIVEANDKKRARLNCIDHLLKQIPYEDVPHEDITLPERIFNPNYERKVLPPELYVPAKY.

It belongs to the polyphosphate kinase 2 (PPK2) family. Class I subfamily.

It catalyses the reaction [phosphate](n) + ATP = [phosphate](n+1) + ADP. The enzyme catalyses [phosphate](n) + GTP = [phosphate](n+1) + GDP. Uses inorganic polyphosphate (polyP) as a donor to convert ADP to ATP. Can also convert GDP to GTP, with lower efficiency. The chain is ADP-polyphosphate phosphotransferase 2 from Rhizobium meliloti (strain 1021) (Ensifer meliloti).